A 416-amino-acid chain; its full sequence is DNA-guanine transglycosylase (416 aa).

The active-site Proton acceptor is D95. D256 (nucleophile) is an active-site residue. The Zn(2+) site is built by C368, C370, C373, and H395.

This sequence belongs to the DNA-guanine transglycosylase family. Zn(2+) serves as cofactor.

Functionally, part of the dpd cluster involved in the insertion of 7-deazaguanine derivatives in DNA. DpdA may insert 7-cyano-7-deazaguanine (preQ0) into DNA with the help of DpdB. DpdA and dpdB are necessary and sufficient to synthesize 2'-deoxy-7-cyano-7-deazaguanosine (dPreQ0). This is DNA-guanine transglycosylase from Salmonella montevideo.